The following is a 298-amino-acid chain: ADP/ATP translocase 3 (298 aa).

M1 is subject to N-acetylmethionine. At 1-7 (MTEQAIS) the chain is on the mitochondrial intermembrane side. T2 bears the N-acetylthreonine; in ADP/ATP translocase 3, N-terminally processed mark. Residues 6–98 (ISFAKDFLAG…FAFKDKYKQI (93 aa)) form a Solcar 1 repeat. Residues 8–37 (FAKDFLAGGIAAAISKTAVAPIERVKLLLQ) traverse the membrane as a helical segment. Residues 38–74 (VQHASKQIAADKQYKGIVDCIVRIPKEQGVLSFWRGN) are Mitochondrial matrix-facing. K52 bears the N6,N6,N6-trimethyllysine mark. A helical membrane pass occupies residues 75-99 (LANVIRYFPTQALNFAFKDKYKQIF). ADP is bound by residues R80 and K92. Over 100 to 109 (LGGVDKRTQF) the chain is Mitochondrial intermembrane. Residue K105 is modified to N6-acetyllysine. Residues 110-130 (WRYFAGNLASGGAAGATSLCF) form a helical membrane-spanning segment. 2 Solcar repeats span residues 111-201 (RYFA…AKGM) and 212-297 (VSWM…LKKV). The Mitochondrial matrix segment spans residues 131 to 178 (VYPLDFARTRLAADVGKSGSEREFRGLGDCLVKITKSDGIRGLYQGFN). The chain crosses the membrane as a helical span at residues 179–199 (VSVQGIIIYRAAYFGIYDTAK). Over 200 to 210 (GMLPDPKNTHI) the chain is Mitochondrial intermembrane. A helical transmembrane segment spans residues 211-231 (VVSWMIAQTVTAVAGVVSYPF). Residues 232–273 (DTVRRRMMMQSGRKGADIMYKGTVDCWRKILKDEGGKAFFKG) lie on the Mitochondrial matrix side of the membrane. R235 lines the ADP pocket. The important for transport activity stretch occupies residues 235–240 (RRRMMM). Positions 235 to 240 (RRRMMM) match the Nucleotide carrier signature motif motif. K268 is subject to N6-acetyllysine. The helical transmembrane segment at 274–291 (AWSNVLRGMGGAFVLVLY) threads the bilayer. Over 292-298 (DELKKVI) the chain is Mitochondrial intermembrane.

The protein belongs to the mitochondrial carrier (TC 2.A.29) family. As to quaternary structure, monomer. Found in a complex with ARL2, ARL2BP and SLC25A6/ANT3. Post-translationally, trimethylated by ANTKMT at Lys-52.

The protein localises to the mitochondrion inner membrane. Its subcellular location is the membrane. It carries out the reaction ADP(in) + ATP(out) = ADP(out) + ATP(in). The enzyme catalyses H(+)(in) = H(+)(out). With respect to regulation, the matrix-open state (m-state) is inhibited by the membrane-permeable bongkrekic acid (BKA). The cytoplasmic-open state (c-state) is inhibited by the membrane-impermeable toxic inhibitor carboxyatractyloside (CATR). Proton transporter activity is inhibited by ADP:ATP antiporter activity. In terms of biological role, ADP:ATP antiporter that mediates import of ADP into the mitochondrial matrix for ATP synthesis, and export of ATP out to fuel the cell. Cycles between the cytoplasmic-open state (c-state) and the matrix-open state (m-state): operates by the alternating access mechanism with a single substrate-binding site intermittently exposed to either the cytosolic (c-state) or matrix (m-state) side of the inner mitochondrial membrane. In addition to its ADP:ATP antiporter activity, also involved in mitochondrial uncoupling and mitochondrial permeability transition pore (mPTP) activity. Plays a role in mitochondrial uncoupling by acting as a proton transporter: proton transport uncouples the proton flows via the electron transport chain and ATP synthase to reduce the efficiency of ATP production and cause mitochondrial thermogenesis. Proton transporter activity is inhibited by ADP:ATP antiporter activity, suggesting that SLC25A6/ANT3 acts as a master regulator of mitochondrial energy output by maintaining a delicate balance between ATP production (ADP:ATP antiporter activity) and thermogenesis (proton transporter activity). Proton transporter activity requires free fatty acids as cofactor, but does not transport it. Also plays a key role in mPTP opening, a non-specific pore that enables free passage of the mitochondrial membranes to solutes of up to 1.5 kDa, and which contributes to cell death. It is however unclear if SLC25A6/ANT3 constitutes a pore-forming component of mPTP or regulates it. This chain is ADP/ATP translocase 3, found in Bos taurus (Bovine).